The sequence spans 440 residues: Serine/threonine-protein kinase VRK1 (440 aa).

The Protein kinase domain occupies 37-317; it reads WKLGLPIGQG…LLEYTEKPLY (281 aa). Residues 43–51 and K71 contribute to the ATP site; that span reads IGQGGFGCI. K71 is covalently cross-linked (Glycyl lysine isopeptide (Lys-Gly) (interchain with G-Cter in SUMO2)). D177 functions as the Proton acceptor in the catalytic mechanism. Residue S342 is modified to Phosphoserine; by PLK3. S376 carries the post-translational modification Phosphoserine. T378 is modified (phosphothreonine). Composition is skewed to polar residues over residues 379–391 and 398–410; these read QVQE…SVES and SMSQ…SSSD. The tract at residues 379 to 440 is disordered; that stretch reads QVQEAAQTRS…GSRTRKKAQK (62 aa). Positions 387–393 are required for interaction with the nucleosome; that stretch reads RSVESQG.

The protein belongs to the protein kinase superfamily. CK1 Ser/Thr protein kinase family. VRK subfamily. As to quaternary structure, interacts with HDAC1, KAT2B, SETDB1, KDM3A and KDM4A. Associates with the nucleosome through interactions with nucleosome DNA, histone H2A and histone H2B; the interaction with H2A and H2B is mediated by the nucleosome acidic patch, a cluster of negatively charged residues of H2A and H2B forming a cleft within the nucleosome core. Post-translationally, autophosphorylated at various serine and threonine residues. Autophosphorylation does not impair its ability to phosphorylate p53/TP53. Phosphorylation by PLK3 leads to induction of Golgi fragmentation during mitosis. Highly expressed in testis. Expressed in liver, kidney and muscle. Weakly expressed in thymus, bone marrow and spleen.

The protein localises to the nucleus. It localises to the cytoplasm. It is found in the cajal body. The catalysed reaction is L-seryl-[protein] + ATP = O-phospho-L-seryl-[protein] + ADP + H(+). It carries out the reaction L-threonyl-[protein] + ATP = O-phospho-L-threonyl-[protein] + ADP + H(+). With respect to regulation, active in presence of Mn(2+), Mg(2+) and Zn(2+), but is not functional with Ca(2+) or Cu(2+). Has a higher affinity for Mn(2+) than for Mg(2+). RAN inhibits its autophosphorylation and its ability to phosphorylate histone H3. Serine/threonine kinase involved in the regulation of key cellular processes including the cell cycle, nuclear condensation, transcription regulation, and DNA damage response. Controls chromatin organization and remodeling by mediating phosphorylation of histone H3 on 'Thr-4' and histone H2AX (H2aXT4ph). It also phosphorylates KAT5 in response to DNA damage, promoting KAT5 association with chromatin and histone acetyltransferase activity. Is involved in the regulation of cell cycle progression of neural progenitors, and is required for proper cortical neuronal migration. Is involved in neurite elongation and branching in motor neurons, and has an essential role in Cajal bodies assembly, acting through COIL phosphorylation and the control of coilin degradation. Involved in Golgi disassembly during the cell cycle: following phosphorylation by PLK3 during mitosis, required to induce Golgi fragmentation. Phosphorylates BANF1: disrupts its ability to bind DNA, reduces its binding to LEM domain-containing proteins and causes its relocalization from the nucleus to the cytoplasm. Phosphorylates TP53BP1 and p53/TP53 on 'Thr-18', preventing the interaction between p53/TP53 and MDM2. Phosphorylates ATF2 which activates its transcriptional activity. Phosphorylates JUN. This chain is Serine/threonine-protein kinase VRK1, found in Mus musculus (Mouse).